We begin with the raw amino-acid sequence, 1137 residues long: Phytochrome C (1137 aa).

A compositionally biased stretch (low complexity) spans 1–18 (MSSSRSNNRATCSRSSSA). Residues 1-27 (MSSSRSNNRATCSRSSSARSKHSARVV) are disordered. Residues 217–400 (NLSLLCDVLV…VFGIQINKEV (184 aa)) enclose the GAF domain. C322 serves as a coordination point for phytochromobilin. PAS domains lie at 620–690 (VTNE…LQGI) and 750–824 (IQGD…TKLS). Residues 904–1124 (YIRQELRNPL…IVLVEFPVAQ (221 aa)) form the Histidine kinase domain.

The protein belongs to the phytochrome family. In terms of assembly, homodimer. Contains one covalently linked phytochromobilin chromophore.

Functionally, regulatory photoreceptor which exists in two forms that are reversibly interconvertible by light: the Pr form that absorbs maximally in the red region of the spectrum and the Pfr form that absorbs maximally in the far-red region. Photoconversion of Pr to Pfr induces an array of morphogenic responses, whereas reconversion of Pfr to Pr cancels the induction of those responses. Pfr controls the expression of a number of nuclear genes including those encoding the small subunit of ribulose-bisphosphate carboxylase, chlorophyll A/B binding protein, protochlorophyllide reductase, rRNA, etc. It also controls the expression of its own gene(s) in a negative feedback fashion. The polypeptide is Phytochrome C (PHYC) (Oryza sativa subsp. indica (Rice)).